The sequence spans 93 residues: Aspartyl/glutamyl-tRNA(Asn/Gln) amidotransferase subunit C (93 aa).

This sequence belongs to the GatC family. In terms of assembly, heterotrimer of A, B and C subunits.

The enzyme catalyses L-glutamyl-tRNA(Gln) + L-glutamine + ATP + H2O = L-glutaminyl-tRNA(Gln) + L-glutamate + ADP + phosphate + H(+). The catalysed reaction is L-aspartyl-tRNA(Asn) + L-glutamine + ATP + H2O = L-asparaginyl-tRNA(Asn) + L-glutamate + ADP + phosphate + 2 H(+). In terms of biological role, allows the formation of correctly charged Asn-tRNA(Asn) or Gln-tRNA(Gln) through the transamidation of misacylated Asp-tRNA(Asn) or Glu-tRNA(Gln) in organisms which lack either or both of asparaginyl-tRNA or glutaminyl-tRNA synthetases. The reaction takes place in the presence of glutamine and ATP through an activated phospho-Asp-tRNA(Asn) or phospho-Glu-tRNA(Gln). This chain is Aspartyl/glutamyl-tRNA(Asn/Gln) amidotransferase subunit C, found in Methanococcoides burtonii (strain DSM 6242 / NBRC 107633 / OCM 468 / ACE-M).